The chain runs to 369 residues: tRNA/tmRNA (uracil-C(5))-methyltransferase (369 aa).

5 residues coordinate S-adenosyl-L-methionine: Q193, Y221, N226, E242, and D302. C327 (nucleophile) is an active-site residue. E361 (proton acceptor) is an active-site residue.

It belongs to the class I-like SAM-binding methyltransferase superfamily. RNA M5U methyltransferase family. TrmA subfamily.

The catalysed reaction is uridine(54) in tRNA + S-adenosyl-L-methionine = 5-methyluridine(54) in tRNA + S-adenosyl-L-homocysteine + H(+). The enzyme catalyses uridine(341) in tmRNA + S-adenosyl-L-methionine = 5-methyluridine(341) in tmRNA + S-adenosyl-L-homocysteine + H(+). Dual-specificity methyltransferase that catalyzes the formation of 5-methyluridine at position 54 (m5U54) in all tRNAs, and that of position 341 (m5U341) in tmRNA (transfer-mRNA). The polypeptide is tRNA/tmRNA (uracil-C(5))-methyltransferase (Actinobacillus succinogenes (strain ATCC 55618 / DSM 22257 / CCUG 43843 / 130Z)).